The primary structure comprises 257 residues: Deoxyribose-phosphate aldolase (257 aa).

Asp-102 serves as the catalytic Proton donor/acceptor. The active-site Schiff-base intermediate with acetaldehyde is the Lys-165. Lys-199 acts as the Proton donor/acceptor in catalysis.

It belongs to the DeoC/FbaB aldolase family. DeoC type 2 subfamily.

The protein localises to the cytoplasm. The enzyme catalyses 2-deoxy-D-ribose 5-phosphate = D-glyceraldehyde 3-phosphate + acetaldehyde. It functions in the pathway carbohydrate degradation; 2-deoxy-D-ribose 1-phosphate degradation; D-glyceraldehyde 3-phosphate and acetaldehyde from 2-deoxy-alpha-D-ribose 1-phosphate: step 2/2. Its function is as follows. Catalyzes a reversible aldol reaction between acetaldehyde and D-glyceraldehyde 3-phosphate to generate 2-deoxy-D-ribose 5-phosphate. The sequence is that of Deoxyribose-phosphate aldolase from Photobacterium profundum (strain SS9).